We begin with the raw amino-acid sequence, 46 residues long: Mu-segestritoxin-Sf1d (46 aa).

4 cysteine pairs are disulfide-bonded: Cys-3–Cys-19, Cys-10–Cys-22, Cys-18–Cys-42, and Cys-24–Cys-40. Residues 31 to 33 form a keys region for toxin activity region; sequence RPW.

This sequence belongs to the neurotoxin 16 (SFI) family. As to expression, expressed by the venom gland.

Its subcellular location is the secreted. Functionally, insecticidal toxin. It inhibits insect voltage-gated sodium channels (Nav) by partially blocking the channel pore in DUM neurons from the American cockroach, not by acting as a gating modifier. The inhibition is only partially reversible after prolonged washout. In vivo, the toxin causes flaccid paralysis followed by death when injected into Heliothis virescens larvae. It also causes uncoordinated movements followed by full paralysis to sheep blowflies (Lucilia cuprina). When the toxin is fused to snowdrop lectin, it is orally active against larvae of the tomato moth (Laconobia oleracea), the rice brown planthopper (Nilaparvata lugens), and the peach-potato aphid (Myzus persicae). The chain is Mu-segestritoxin-Sf1d from Segestria florentina (Tube-web spider).